A 419-amino-acid chain; its full sequence is Glutamate dehydrogenase (419 aa).

Lys105 is an active-site residue. Position 219–225 (219–225 (GYGNAGY)) interacts with NAD(+).

The protein belongs to the Glu/Leu/Phe/Val dehydrogenases family. In terms of assembly, homohexamer.

The protein resides in the cytoplasm. It catalyses the reaction L-glutamate + NAD(+) + H2O = 2-oxoglutarate + NH4(+) + NADH + H(+). The catalysed reaction is L-glutamate + NADP(+) + H2O = 2-oxoglutarate + NH4(+) + NADPH + H(+). This chain is Glutamate dehydrogenase (gdhA), found in Thermococcus litoralis (strain ATCC 51850 / DSM 5473 / JCM 8560 / NS-C).